The chain runs to 372 residues: AA9 family lytic polysaccharide monooxygenase C (372 aa).

The N-terminal stretch at 1 to 16 (MFRSALFLLLAPLALS) is a signal peptide. His17 and His99 together coordinate Cu(2+). The cysteines at positions 59 and 189 are disulfide-linked. 2 residues coordinate O2: His174 and Gln184. Tyr186 serves as a coordination point for Cu(2+).

The protein belongs to the polysaccharide monooxygenase AA9 family. It depends on Cu(2+) as a cofactor.

The protein localises to the secreted. It carries out the reaction [(1-&gt;4)-beta-D-glucosyl]n+m + reduced acceptor + O2 = 4-dehydro-beta-D-glucosyl-[(1-&gt;4)-beta-D-glucosyl]n-1 + [(1-&gt;4)-beta-D-glucosyl]m + acceptor + H2O.. Lytic polysaccharide monooxygenase (LPMO) that depolymerizes crystalline and amorphous polysaccharides via the oxidation of scissile alpha- or beta-(1-4)-glycosidic bonds, yielding C1 or C4 oxidation products. Catalysis by LPMOs requires the reduction of the active-site copper from Cu(II) to Cu(I) by a reducing agent and H(2)O(2) or O(2) as a cosubstrate. This Aspergillus tamarii protein is AA9 family lytic polysaccharide monooxygenase C.